The following is a 297-amino-acid chain: Probable endonuclease 4 (297 aa).

Residues His-68, His-109, Glu-144, Asp-178, His-181, His-213, Asp-226, His-228, and Glu-258 each contribute to the Zn(2+) site.

The protein belongs to the AP endonuclease 2 family. Zn(2+) is required as a cofactor.

It carries out the reaction Endonucleolytic cleavage to 5'-phosphooligonucleotide end-products.. Endonuclease IV plays a role in DNA repair. It cleaves phosphodiester bonds at apurinic or apyrimidinic (AP) sites, generating a 3'-hydroxyl group and a 5'-terminal sugar phosphate. The protein is Probable endonuclease 4 of Enterococcus faecalis (strain ATCC 700802 / V583).